Reading from the N-terminus, the 336-residue chain is Tryptophan--tRNA ligase (336 aa).

Residues 15 to 17 (QPT) and 24 to 25 (GN) contribute to the ATP site. Residues 16–25 (PTSDSLHLGN) carry the 'HIGH' region motif. D141 serves as a coordination point for L-tryptophan. Residues 153–155 (GED), I192, and 201–205 (KMSKS) contribute to the ATP site. A 'KMSKS' region motif is present at residues 201-205 (KMSKS).

The protein belongs to the class-I aminoacyl-tRNA synthetase family. In terms of assembly, homodimer.

Its subcellular location is the cytoplasm. The catalysed reaction is tRNA(Trp) + L-tryptophan + ATP = L-tryptophyl-tRNA(Trp) + AMP + diphosphate + H(+). Functionally, catalyzes the attachment of tryptophan to tRNA(Trp). The sequence is that of Tryptophan--tRNA ligase from Mycobacterium tuberculosis (strain CDC 1551 / Oshkosh).